We begin with the raw amino-acid sequence, 122 residues long: Large ribosomal subunit protein uL14 (122 aa).

It belongs to the universal ribosomal protein uL14 family. As to quaternary structure, part of the 50S ribosomal subunit. Forms a cluster with proteins L3 and L19. In the 70S ribosome, L14 and L19 interact and together make contacts with the 16S rRNA in bridges B5 and B8.

In terms of biological role, binds to 23S rRNA. Forms part of two intersubunit bridges in the 70S ribosome. This is Large ribosomal subunit protein uL14 from Rubrobacter xylanophilus (strain DSM 9941 / JCM 11954 / NBRC 16129 / PRD-1).